The following is a 438-amino-acid chain: Putative permease HI_0125 (438 aa).

13 helical membrane-spanning segments follow: residues Ile-21–Met-41, Ser-51–Ala-71, Ala-73–Ile-93, Val-97–Ser-117, Ala-137–Val-157, Leu-167–Gly-187, Gly-195–Val-215, Phe-238–Val-258, Leu-296–Thr-316, Ala-326–Val-346, Pro-347–Ser-367, Phe-386–Ile-406, and Asn-418–Ile-438. Gly-315–Thr-322 is an ATP binding site.

The protein belongs to the nucleobase:cation symporter-2 (NCS2) (TC 2.A.40) family. Azg-like subfamily.

The protein resides in the cell membrane. The sequence is that of Putative permease HI_0125 from Haemophilus influenzae (strain ATCC 51907 / DSM 11121 / KW20 / Rd).